A 362-amino-acid polypeptide reads, in one-letter code: Transcription factor Sox-7 (362 aa).

The tract at residues 19-41 is disordered; that stretch reads MDGDLSDGLSPHRSPREKGSETR. Basic and acidic residues predominate over residues 32-41; the sequence is SPREKGSETR. The HMG box DNA-binding region spans 42–110; that stretch reads IRRPMNAFMV…QHMQDYPNYK (69 aa). In terms of domain architecture, Sox C-terminal spans 246–362; it reads QPGSSMIPPV…ATYYNSYSVS (117 aa).

Localized to the vegetal hemisphere of blastula embryos. Tissue-specific expression in early neurula (stage 13-14) embryos begins in the ciliate cells of the epidermis. Starting about stage 24, expression is found in a lateral stripe on each side of the embryo, with expression extending more posteriorly as development proceeds. Expressed in embryonic vasculature, as well as in the procardia tube, endocardium, notochord and hindbrain. As development proceeds, strong expression is seen in the hindbrain, posterior cardinal veins, aortic arch, stomodeal depression, epithelium and intersomitic arteries of stage 33/34 larvae. Expressed in posterior rhombomeres. By stage 40 larvae, expression in most of the vascular endothelia disappears, in particular in the posterior cardinal vein, but expression continues in the hindbrain. Expressed in a wide range of adult tissues, including ovary, testis, kidney, bladder, duodenum and liver.

Its subcellular location is the nucleus. Functionally, transcription factor. Binds to the DNA sequence 5'-AACAAT-3'. Acts downstream of vegt and upstream of nodal signaling to promote endodermal and mesodermal differentiation by promoting vegt-induced expression of both endodermal genes (including endodermin) and mesodermal genes (including snai1/snail and snai2/slug). Induces expression of multiple nodal genes (including nodal, nodal2, nodal4, nodal5 and nodal6) and binds directly to sites within the promoter of the nodal5 gene. The endodermal and mesodermal specification pathways then interact to initiate cardiogenesis. Acts partially redundantly with sox18 during cardiogenesis. Also acts as an antagonist of beta-catenin signaling. Regulates (possibly indirectly) development of the pronephros, the functional larval kidney. The polypeptide is Transcription factor Sox-7 (sox7) (Xenopus laevis (African clawed frog)).